Consider the following 973-residue polypeptide: Vacuolar protein sorting-associated protein 18 homolog (973 aa).

The residue at position 2 (alanine 2) is an N-acetylalanine. Serine 3, serine 11, and serine 13 each carry phosphoserine. Position 362 is an N6-acetyllysine (lysine 362). The stretch at 454-481 (EEIALKFLEARQEEALAEFLQRKLASLK) forms a coiled coil. The CHCR repeat unit spans residues 618 to 772 (GSRLDARQLI…VVQEEEDVQT (155 aa)). Serine 689 is subject to Phosphoserine. Residues 802 to 848 (KEAICSSLKAYNHHIQELQREMEEATASAQRIRRDLQELRGRYGTVE) adopt a coiled-coil conformation. An RING-type zinc finger spans residues 853-947 (CATCDFPLLN…ELVAAECVYC (95 aa)). Residues 903–929 (GAAPPPAKGSARAKEAEGGAATAGPSR) are disordered. Position 912 is a phosphoserine (serine 912).

This sequence belongs to the VPS18 family. As to quaternary structure, core component of at least two putative endosomal tethering complexes, the homotypic fusion and vacuole protein sorting (HOPS) complex and the class C core vacuole/endosome tethering (CORVET) complex. Their common core is composed of the class C Vps proteins VPS11, VPS16, VPS18 and VPS33A, which in HOPS further associates with VPS39 and VPS41 and in CORVET with VPS8 and TGFBRAP1. Interacts with RAB5C. Interacts with HOOK1. Interacts with STX7, MON1B. Associates with adaptor protein complex 3 (AP-3) and clathrin:AP-3 complexes. Interacts with SYNPO2. Interacts with PLEKHM1. In terms of tissue distribution, ubiquitous. Expression was highest in heart and low in lung.

It is found in the late endosome membrane. It localises to the lysosome membrane. The protein resides in the early endosome. The protein localises to the cytoplasmic vesicle. Its subcellular location is the autophagosome. It is found in the clathrin-coated vesicle. Plays a role in vesicle-mediated protein trafficking to lysosomal compartments including the endocytic membrane transport and autophagic pathways. Believed to act as a core component of the putative HOPS and CORVET endosomal tethering complexes which are proposed to be involved in the Rab5-to-Rab7 endosome conversion probably implicating MON1A/B, and via binding SNAREs and SNARE complexes to mediate tethering and docking events during SNARE-mediated membrane fusion. The HOPS complex is proposed to be recruited to Rab7 on the late endosomal membrane and to regulate late endocytic, phagocytic and autophagic traffic towards lysosomes. The CORVET complex is proposed to function as a Rab5 effector to mediate early endosome fusion probably in specific endosome subpopulations. Required for fusion of endosomes and autophagosomes with lysosomes. Involved in dendrite development of Pukinje cells. This Homo sapiens (Human) protein is Vacuolar protein sorting-associated protein 18 homolog.